We begin with the raw amino-acid sequence, 419 residues long: MDKLIITGGACLDGEIRISGAKNAALPILAATLLADGPVTVGNLPHLHDITTMIELFGRMGIEPVIDEKLAVEIDPRTIKTLVAPYELVKTMRASILVLGPMVARFGEAEVALPGGCAIGSRPVDLHIRGLEAMGAKIEVQGGYIKAKAPEGGLRGAHFFFDTVSVTGTENIMMAAALAKGRSVLQNAAREPEVVDLANFINAMGGKVQGAGTDTIVIDGVERLHSANYRVMPDRIETGTYLVAAAVTGGRVKVKDTDPTILEAVLEKLKEAGADINTGEDWIELDMHGKRPKAVNLRTAPYPAFPTDMQAQFISLNAIAEGTGAVIETIFENRFMHVYEMHRMGAQIQVEGNTAIVTGVKALKVPGNGHLRASASLVLSALVAEGDTLIDRIYHIDRGYECIEEKLQMLGAKIRRVPG.

Residue 22–23 coordinates phosphoenolpyruvate; it reads KN. A UDP-N-acetyl-alpha-D-glucosamine-binding site is contributed by Arg-93. Cys-117 serves as the catalytic Proton donor. Position 117 is a 2-(S-cysteinyl)pyruvic acid O-phosphothioketal (Cys-117). UDP-N-acetyl-alpha-D-glucosamine contacts are provided by residues 122 to 126, Asp-308, and Ile-330; that span reads RPVDL.

The protein belongs to the EPSP synthase family. MurA subfamily.

It localises to the cytoplasm. The enzyme catalyses phosphoenolpyruvate + UDP-N-acetyl-alpha-D-glucosamine = UDP-N-acetyl-3-O-(1-carboxyvinyl)-alpha-D-glucosamine + phosphate. The protein operates within cell wall biogenesis; peptidoglycan biosynthesis. In terms of biological role, cell wall formation. Adds enolpyruvyl to UDP-N-acetylglucosamine. This is UDP-N-acetylglucosamine 1-carboxyvinyltransferase from Pseudomonas putida (Arthrobacter siderocapsulatus).